The chain runs to 254 residues: Phosphate import ATP-binding protein PstB (254 aa).

The 243-residue stretch at 7-249 (MVAESMSFYY…PREKQTEDYI (243 aa)) folds into the ABC transporter domain. 39–46 (GPSGCGKS) contacts ATP.

It belongs to the ABC transporter superfamily. Phosphate importer (TC 3.A.1.7) family. In terms of assembly, the complex is composed of two ATP-binding proteins (PstB), two transmembrane proteins (PstC and PstA) and a solute-binding protein (PstS).

It is found in the cell inner membrane. It carries out the reaction phosphate(out) + ATP + H2O = ADP + 2 phosphate(in) + H(+). Part of the ABC transporter complex PstSACB involved in phosphate import. Responsible for energy coupling to the transport system. The polypeptide is Phosphate import ATP-binding protein PstB (Chlorobium chlorochromatii (strain CaD3)).